An 803-amino-acid chain; its full sequence is Volume-regulated anion channel subunit LRRC8C (803 aa).

Over 1-22 the chain is Cytoplasmic; it reads MIPVTEFRQFSEQQPAFRVLKP. Residues 23–47 traverse the membrane as a helical segment; sequence WWDVFTDYLSVAMLMIGVFGCTLQV. The Extracellular portion of the chain corresponds to 48 to 124; it reads MQDKIICLPK…CYERALHWYA (77 aa). 2 disulfide bridges follow: Cys54/Cys308 and Cys115/Cys293. Residues Asn64 and Asn70 are each glycosylated (N-linked (GlcNAc...) asparagine). A helical membrane pass occupies residues 125 to 144; it reads KYFPYLVLIHTLVFMLCSNF. Residues 145–262 are Cytoplasmic-facing; sequence WFKFPGSSSK…EEGDILYAMY (118 aa). Positions 177–209 are disordered; the sequence is EVSGEDSEEKDNRKNNMNRSNTIQSGPEDSLVN. The span at 191–209 shows a compositional bias: polar residues; that stretch reads NNMNRSNTIQSGPEDSLVN. Phosphoserine is present on residues Ser212 and Ser215. The helical transmembrane segment at 263-284 threads the bilayer; it reads VRQTVLKVIKFLIIIAYNSALV. At 285 to 314 the chain is on the extracellular side; it reads SKVQFTVDCNVDIQDMTGYKNFSCNHTMAH. The helical transmembrane segment at 315-339 threads the bilayer; the sequence is LFSKLSFCYLCFVSIYGLTCLYTLY. Over 340–803 the chain is Cytoplasmic; the sequence is WLFYRSLREY…SDVREQMKTE (464 aa). LRR repeat units follow at residues 397–420, 421–443, 446–466, 467–488, 490–513, 515–537, 541–563, 565–587, 588–611, 613–635, 636–659, 660–682, 684–705, 706–728, 730–751, 753–774, and 776–799; these read ENKL…KLQT, NAHN…VFEI, LQSL…IAQL, DNLQ…ALSF, KENL…MYGL, NLEE…TLES, LKSL…VVDV, SHLQ…NLKK, MTNL…VFSL, SLQE…SFQH, LRKL…IKKL, TSLE…LFLC, KIRY…IGVL, QSLQ…LYFC, KLKT…IGNL, FLSY…LGDC, and ALKR…VREQ.

The protein belongs to the LRRC8 family. In terms of assembly, heterohexamer; oligomerizes with other LRRC8 proteins (LRRC8A, LRRC8B, LRRC8D and/or LRRC8E) to form a heterohexamer. Homoheptamer; inactive, likely because it is not targeted to the plasma membrane in the absence of LRRC8A. In vivo, the subunit composition may depend primarily on expression levels, and heterooligomeric channels containing various proportions of the different LRRC8 proteins may coexist. In terms of tissue distribution, expressed at highest levels in skeletal muscle, and at moderate levels in heart, lung and peripheral blood leukocytes.

The protein resides in the cell membrane. It localises to the endoplasmic reticulum membrane. It catalyses the reaction chloride(in) = chloride(out). It carries out the reaction iodide(out) = iodide(in). The catalysed reaction is taurine(out) = taurine(in). The enzyme catalyses 2',3'-cGAMP(out) = 2',3'-cGAMP(in). In terms of biological role, non-essential component of the volume-regulated anion channel (VRAC, also named VSOAC channel), an anion channel required to maintain a constant cell volume in response to extracellular or intracellular osmotic changes. The VRAC channel conducts iodide better than chloride and can also conduct organic osmolytes like taurine. Plays a redundant role in the efflux of amino acids, such as aspartate and glutamate, in response to osmotic stress. The VRAC channel also mediates transport of immunoreactive cyclic dinucleotide GMP-AMP (2'-3'-cGAMP), an immune messenger produced in response to DNA virus in the cytosol. Channel activity requires LRRC8A plus at least one other family member (LRRC8B, LRRC8C, LRRC8D or LRRC8E); channel characteristics depend on the precise subunit composition. This Homo sapiens (Human) protein is Volume-regulated anion channel subunit LRRC8C.